The primary structure comprises 124 residues: MSVFGGLWRSAVNLCQSSRLFSTGSCARIRMHAIPKLKEVDRWTEKRSMFGVYDNIGILGDFKAHPKDMIRGPVWVRGFRGNELQRLLRKRNMVGDRMMTEDRHNLQKRISHLYRRFNRHGKHR.

The transit peptide at 1–31 (MSVFGGLWRSAVNLCQSSRLFSTGSCARIRM) directs the protein to the mitochondrion.

This sequence belongs to the mitochondrion-specific ribosomal protein mL51 family. Component of the mitochondrial ribosome large subunit (39S) which comprises a 16S rRNA and about 50 distinct proteins.

Its subcellular location is the mitochondrion. The sequence is that of Large ribosomal subunit protein mL51 (mrpl51) from Danio rerio (Zebrafish).